The chain runs to 122 residues: Large ribosomal subunit protein uL14c (122 aa).

This sequence belongs to the universal ribosomal protein uL14 family. As to quaternary structure, part of the 50S ribosomal subunit.

It localises to the plastid. The protein localises to the chloroplast. Functionally, binds to 23S rRNA. The sequence is that of Large ribosomal subunit protein uL14c from Pinus koraiensis (Korean pine).